We begin with the raw amino-acid sequence, 441 residues long: Ribosomal protein uS12 methylthiotransferase RimO (441 aa).

In terms of domain architecture, MTTase N-terminal spans 8–118 (PKIGFVSLGC…VLQHVHHYVP (111 aa)). Cysteine 17, cysteine 53, cysteine 82, cysteine 150, cysteine 154, and cysteine 157 together coordinate [4Fe-4S] cluster. Residues 136–373 (LTPRHYAYLK…MQLQQQISAE (238 aa)) enclose the Radical SAM core domain. The 66-residue stretch at 376–441 (QEKVGREILV…DEYDLWGSRV (66 aa)) folds into the TRAM domain.

It belongs to the methylthiotransferase family. RimO subfamily. The cofactor is [4Fe-4S] cluster.

The protein resides in the cytoplasm. It carries out the reaction L-aspartate(89)-[ribosomal protein uS12]-hydrogen + (sulfur carrier)-SH + AH2 + 2 S-adenosyl-L-methionine = 3-methylsulfanyl-L-aspartate(89)-[ribosomal protein uS12]-hydrogen + (sulfur carrier)-H + 5'-deoxyadenosine + L-methionine + A + S-adenosyl-L-homocysteine + 2 H(+). Functionally, catalyzes the methylthiolation of an aspartic acid residue of ribosomal protein uS12. The sequence is that of Ribosomal protein uS12 methylthiotransferase RimO from Salmonella agona (strain SL483).